The chain runs to 593 residues: DNA primase (593 aa).

Residues 38–62 (CPFHQEKTPSFTVSDSKRFFYCFGC) form a CHC2-type zinc finger. Positions 250–332 (NRSILVEGYF…EKKISFIRLP (83 aa)) constitute a Toprim domain. 3 residues coordinate Mg(2+): Glu-256, Asp-300, and Asp-302.

This sequence belongs to the DnaG primase family. Monomer. Interacts with DnaB. Zn(2+) is required as a cofactor. It depends on Mg(2+) as a cofactor.

It carries out the reaction ssDNA + n NTP = ssDNA/pppN(pN)n-1 hybrid + (n-1) diphosphate.. RNA polymerase that catalyzes the synthesis of short RNA molecules used as primers for DNA polymerase during DNA replication. In Rickettsia typhi (strain ATCC VR-144 / Wilmington), this protein is DNA primase.